The chain runs to 558 residues: Putative cation/proton antiporter YbaL (558 aa).

Residues 1-3 (MHH) lie on the Periplasmic side of the membrane. Residues 4 to 24 (ATPLITTIVGGLVLAFILGML) form a helical membrane-spanning segment. Over 25–31 (ANKLRIS) the chain is Cytoplasmic. A helical transmembrane segment spans residues 32-52 (PLVGYLLAGVLAGPFTPGFVA). Residues 53 to 55 (DTK) lie on the Periplasmic side of the membrane. The chain crosses the membrane as a helical span at residues 56–76 (LAPELAELGVILLMFGVGLHF). The Cytoplasmic segment spans residues 77-85 (SLKDLMAVK). A helical membrane pass occupies residues 86–106 (AIAIPGAIAQIAVATLLGMAL). Over 107–112 (SAVLGW) the chain is Periplasmic. A helical membrane pass occupies residues 113–133 (SLMTGIVFGLCLSTASTVVLL). Residues 134–148 (RALEERQLIDSQRGQ) lie on the Cytoplasmic side of the membrane. Residues 149–169 (IAIGWLIVEDLVMVLTLVLLP) traverse the membrane as a helical segment. The Periplasmic portion of the chain corresponds to 170–185 (AVAGMMEQGDVGFATL). Residues 186–206 (AVDMGITIGKVIAFIAIMMLV) form a helical membrane-spanning segment. Residues 207–225 (GRRLVPWIMARSAATGSRE) are Cytoplasmic-facing. The chain crosses the membrane as a helical span at residues 226 to 246 (LFTLSVLALALGVAFGAVELF). Asp-247 is a topological domain (periplasmic). Residues 248-268 (VSFALGAFFAGMVLNESELSH) form a helical membrane-spanning segment. Residues 269–279 (RAAHDTLPLRD) lie on the Cytoplasmic side of the membrane. Residues 280–300 (AFAVLFFVSVGMLFDPLILIQ) form a helical membrane-spanning segment. Residues 301–303 (QPL) are Periplasmic-facing. The chain crosses the membrane as a helical span at residues 304–324 (AVLATLAIILFGKSLAAFFLV). Residues 325 to 336 (RLFGHSQRTALT) lie on the Cytoplasmic side of the membrane. The helical transmembrane segment at 337–357 (IAASLAQIGEFAFILAGLGMA) threads the bilayer. Topologically, residues 358–367 (LNLLPQAGQN) are periplasmic. Residues 368-388 (LVLAGAILSIMLNPVLFALLE) traverse the membrane as a helical segment. The Cytoplasmic portion of the chain corresponds to 389–558 (KYLAKTETLE…TPPAGEVVTG (170 aa)). In terms of domain architecture, RCK N-terminal spans 417–534 (CNHALLVGYG…TERGANQVVM (118 aa)). Residues 427-428 (RV), 447-448 (ET), 467-468 (NA), Glu-494, and Arg-514 each bind AMP.

The protein belongs to the monovalent cation:proton antiporter 2 (CPA2) transporter (TC 2.A.37) family.

The protein resides in the cell inner membrane. The chain is Putative cation/proton antiporter YbaL (ybaL) from Escherichia coli (strain K12).